We begin with the raw amino-acid sequence, 292 residues long: UDP-3-O-acyl-N-acetylglucosamine deacetylase (292 aa).

Zn(2+) is bound by residues His-76, His-232, and Asp-236. Residue His-259 is the Proton donor of the active site.

The protein belongs to the LpxC family. Requires Zn(2+) as cofactor.

It carries out the reaction a UDP-3-O-[(3R)-3-hydroxyacyl]-N-acetyl-alpha-D-glucosamine + H2O = a UDP-3-O-[(3R)-3-hydroxyacyl]-alpha-D-glucosamine + acetate. It participates in glycolipid biosynthesis; lipid IV(A) biosynthesis; lipid IV(A) from (3R)-3-hydroxytetradecanoyl-[acyl-carrier-protein] and UDP-N-acetyl-alpha-D-glucosamine: step 2/6. Catalyzes the hydrolysis of UDP-3-O-myristoyl-N-acetylglucosamine to form UDP-3-O-myristoylglucosamine and acetate, the committed step in lipid A biosynthesis. The chain is UDP-3-O-acyl-N-acetylglucosamine deacetylase from Thermodesulfovibrio yellowstonii (strain ATCC 51303 / DSM 11347 / YP87).